The chain runs to 235 residues: RNA pyrophosphohydrolase (235 aa).

The region spanning 6–149 (GFRPNVGIIL…KREVYQLALS (144 aa)) is the Nudix hydrolase domain. The Nudix box motif lies at 38-59 (GGIKYGETPEQAMFRELHEEVG). Residues 161–235 (APLSPYGRGG…PDDTAPKDNS (75 aa)) form a disordered region. The segment covering 171–196 (QHRERDGRDARDSRERSSDQGGRNEQ) has biased composition (basic and acidic residues). The span at 203-220 (TVTTTTVIVETVSVSAPT) shows a compositional bias: low complexity.

It belongs to the Nudix hydrolase family. RppH subfamily. It depends on a divalent metal cation as a cofactor.

Functionally, accelerates the degradation of transcripts by removing pyrophosphate from the 5'-end of triphosphorylated RNA, leading to a more labile monophosphorylated state that can stimulate subsequent ribonuclease cleavage. In Ralstonia pickettii (strain 12J), this protein is RNA pyrophosphohydrolase.